The chain runs to 283 residues: tRNA pseudouridine synthase B (283 aa).

Residue D38 is the Nucleophile of the active site.

Belongs to the pseudouridine synthase TruB family. Type 1 subfamily.

The catalysed reaction is uridine(55) in tRNA = pseudouridine(55) in tRNA. In terms of biological role, responsible for synthesis of pseudouridine from uracil-55 in the psi GC loop of transfer RNAs. The polypeptide is tRNA pseudouridine synthase B (Aster yellows witches'-broom phytoplasma (strain AYWB)).